The primary structure comprises 550 residues: MENQSLTFVGDEEAKVRKSTKFHPSIWGDYFIQNSSLSHAEESTQRMIKRVEELKVQVKSMFKDTSDILQLMNLIDSIQMLGLDYHFENEIDKALRLINEVDDKSYGLYETSLRFRLLRQHGNHVSTDIFNKFKGDNGSFISSLNGDAKGLLSLYNASYLGTHGETILDEAKSFAKPQLISLLSELEQSLAAQVTLFLELPLHKRVKILLVRKYILIYQEGAMRNNVLLEFAKLNFNLLQSLYQEELKKISIWWYDLALAKSLSFTRDRIVECYYWVLTLYFDPQYSHSRLIYSKVISLVSIMDDIYDNYGTLEECRQLTEAIKRWKPQAIDSLPEYLKYFYLKLLKTFEEIGEELEHNEKYRMLYLQDQIKAIAVAYLEEAKWSIERHVPSLDEHLHYSLITSGCSLVPCASYVGMGEVATKEVFDWHSSFPKAVEACCAIGRILNDITSYEREQGRGDNASTVESYMKDHGTNEKDACKKLQEIVEKAWKDLNQESLNQKNISRLIIERLVNFSRSMEEIYMSNDMYTNSGTKMKGNITLVLVEAFPV.

Mg(2+)-binding residues include Asp304, Asp308, and Glu455. The DDXXD motif motif lies at 304 to 308 (DDIYD).

This sequence belongs to the terpene synthase family. Tpsa subfamily. Requires Mg(2+) as cofactor. It depends on Mn(2+) as a cofactor. The cofactor is Co(2+). Ni(2+) is required as a cofactor.

Its subcellular location is the cytoplasm. The enzyme catalyses (2E,6E)-farnesyl diphosphate = (+)-germacrene D + diphosphate. The protein operates within secondary metabolite biosynthesis; terpenoid biosynthesis. Involved in the biosynthesis of germacrene D. Can use farnesyl diphosphate as substrate, but not geranyl diphosphate. Produces mainly (+)-germacrene D along with germacrene B and a number of minor by-products. The chain is (+)-germacrene D synthase from Zingiber officinale (Ginger).